Here is a 312-residue protein sequence, read N- to C-terminus: Malate dehydrogenase (312 aa).

Residues 7–13 (GASGGIG) and D34 contribute to the NAD(+) site. Positions 81 and 87 each coordinate substrate. NAD(+) is bound by residues N94 and 117-119 (ITN). Substrate-binding residues include N119 and R153. The Proton acceptor role is filled by H177. M227 is an NAD(+) binding site.

It belongs to the LDH/MDH superfamily. MDH type 1 family. As to quaternary structure, homodimer.

It carries out the reaction (S)-malate + NAD(+) = oxaloacetate + NADH + H(+). Catalyzes the reversible oxidation of malate to oxaloacetate. The protein is Malate dehydrogenase of Actinobacillus succinogenes (strain ATCC 55618 / DSM 22257 / CCUG 43843 / 130Z).